A 336-amino-acid chain; its full sequence is 4-hydroxythreonine-4-phosphate dehydrogenase (336 aa).

Residue Thr-140 coordinates substrate. A divalent metal cation is bound by residues His-171, His-216, and His-271. Residues Lys-279, Asn-288, and Arg-297 each contribute to the substrate site.

Belongs to the PdxA family. In terms of assembly, homodimer. Zn(2+) is required as a cofactor. The cofactor is Mg(2+). It depends on Co(2+) as a cofactor.

It localises to the cytoplasm. It catalyses the reaction 4-(phosphooxy)-L-threonine + NAD(+) = 3-amino-2-oxopropyl phosphate + CO2 + NADH. Its pathway is cofactor biosynthesis; pyridoxine 5'-phosphate biosynthesis; pyridoxine 5'-phosphate from D-erythrose 4-phosphate: step 4/5. Functionally, catalyzes the NAD(P)-dependent oxidation of 4-(phosphooxy)-L-threonine (HTP) into 2-amino-3-oxo-4-(phosphooxy)butyric acid which spontaneously decarboxylates to form 3-amino-2-oxopropyl phosphate (AHAP). In Erythrobacter litoralis (strain HTCC2594), this protein is 4-hydroxythreonine-4-phosphate dehydrogenase.